Reading from the N-terminus, the 406-residue chain is Zinc metalloprotease Rip1 (406 aa).

The chain crosses the membrane as a helical span at residues 1-21 (MMFGIGIVLFALAILVSVALH). Histidine 21 provides a ligand contact to Zn(2+). The active site involves glutamate 22. Residue histidine 25 participates in Zn(2+) binding. A helical membrane pass occupies residues 108-128 (PAMNFVIGLVLIYGIAIVWGL). A PDZ domain is found at 125–209 (VWGLPNLHQP…RIEFKRDGRV (85 aa)). Zn(2+) is bound at residue aspartate 206. Transmembrane regions (helical) follow at residues 327–349 (NFVL…IAVA) and 375–395 (LMPA…LTVT).

It belongs to the peptidase M50B family. It depends on Zn(2+) as a cofactor.

It localises to the cell membrane. Its activity is regulated as follows. Proteolysis is inhibited by Wag31; when Wag31 is non-functional oxidative stress increases proteolysis. In terms of biological role, a probable intramembrane site-2 protease (S2P) that cleaves type-2 transmembrane proteins within their membrane-spanning domains. Degrades PbpB (PBP3, FtsI) under conditions of oxidatives stress; degradation is inhibited by Wag31-PbpB interaction. Also cleaves anti-sigma factors RskA, RslA and RslM. Site-1 proteases have not yet been identified in this organism. Its function is as follows. Regulated intramembrane proteolysis (RIP) occurs when an extracytoplasmic signal (possibly oxidative stress) triggers a concerted proteolytic cascade to transmit information and elicit cellular responses. The membrane-spanning regulatory substrate protein (includes anti-sigma factors RskA, RslA, RsmA, and PbpB) is first cut extracytoplasmically (site-1 protease, S1P), then within the membrane itself (site-2 protease, S2P, this entry), while cytoplasmic proteases finish degrading the regulatory protein, liberating the effector protein (ECF sigma factors SigK, SigL and SigM). The sequence is that of Zinc metalloprotease Rip1 (rip1) from Mycolicibacterium smegmatis (strain ATCC 700084 / mc(2)155) (Mycobacterium smegmatis).